The chain runs to 506 residues: ATP synthase subunit alpha (506 aa).

171-178 lines the ATP pocket; sequence GDRKTGKT.

It belongs to the ATPase alpha/beta chains family. In terms of assembly, F-type ATPases have 2 components, CF(1) - the catalytic core - and CF(0) - the membrane proton channel. CF(1) has five subunits: alpha(3), beta(3), gamma(1), delta(1), epsilon(1). CF(0) has three main subunits: a(1), b(2) and c(9-12). The alpha and beta chains form an alternating ring which encloses part of the gamma chain. CF(1) is attached to CF(0) by a central stalk formed by the gamma and epsilon chains, while a peripheral stalk is formed by the delta and b chains.

It is found in the cell inner membrane. The enzyme catalyses ATP + H2O + 4 H(+)(in) = ADP + phosphate + 5 H(+)(out). Functionally, produces ATP from ADP in the presence of a proton gradient across the membrane. The alpha chain is a regulatory subunit. The chain is ATP synthase subunit alpha from Anaplasma phagocytophilum (strain HZ).